A 598-amino-acid chain; its full sequence is Elongation factor 4 (598 aa).

Residues 2 to 183 (KHIRNFCIIA…AIIEKIPHPK (182 aa)) enclose the tr-type G domain. Residues 14–19 (DHGKST) and 130–133 (NKVD) contribute to the GTP site.

Belongs to the TRAFAC class translation factor GTPase superfamily. Classic translation factor GTPase family. LepA subfamily.

It is found in the cell inner membrane. It catalyses the reaction GTP + H2O = GDP + phosphate + H(+). Required for accurate and efficient protein synthesis under certain stress conditions. May act as a fidelity factor of the translation reaction, by catalyzing a one-codon backward translocation of tRNAs on improperly translocated ribosomes. Back-translocation proceeds from a post-translocation (POST) complex to a pre-translocation (PRE) complex, thus giving elongation factor G a second chance to translocate the tRNAs correctly. Binds to ribosomes in a GTP-dependent manner. This is Elongation factor 4 from Flavobacterium psychrophilum (strain ATCC 49511 / DSM 21280 / CIP 103535 / JIP02/86).